The chain runs to 997 residues: uncharacterized protein (997 aa).

The protein belongs to the MG414/MG415 family.

This is an uncharacterized protein from Mycoplasma pneumoniae (strain ATCC 29342 / M129 / Subtype 1) (Mycoplasmoides pneumoniae).